Here is a 1267-residue protein sequence, read N- to C-terminus: DNA-directed RNA polymerase subunit beta'' (1267 aa).

Residues Cys-222, Cys-290, Cys-297, and Cys-300 each coordinate Zn(2+).

The protein belongs to the RNA polymerase beta' chain family. RpoC2 subfamily. In terms of assembly, in plastids the minimal PEP RNA polymerase catalytic core is composed of four subunits: alpha, beta, beta', and beta''. When a (nuclear-encoded) sigma factor is associated with the core the holoenzyme is formed, which can initiate transcription. Requires Zn(2+) as cofactor.

It localises to the plastid. The protein localises to the chloroplast. The enzyme catalyses RNA(n) + a ribonucleoside 5'-triphosphate = RNA(n+1) + diphosphate. Functionally, DNA-dependent RNA polymerase catalyzes the transcription of DNA into RNA using the four ribonucleoside triphosphates as substrates. This chain is DNA-directed RNA polymerase subunit beta'', found in Emiliania huxleyi (Coccolithophore).